The chain runs to 212 residues: Peptide methionine sulfoxide reductase MsrA (212 aa).

Cys-52 is a catalytic residue.

The protein belongs to the MsrA Met sulfoxide reductase family.

It carries out the reaction L-methionyl-[protein] + [thioredoxin]-disulfide + H2O = L-methionyl-(S)-S-oxide-[protein] + [thioredoxin]-dithiol. It catalyses the reaction [thioredoxin]-disulfide + L-methionine + H2O = L-methionine (S)-S-oxide + [thioredoxin]-dithiol. In terms of biological role, has an important function as a repair enzyme for proteins that have been inactivated by oxidation. Catalyzes the reversible oxidation-reduction of methionine sulfoxide in proteins to methionine. This is Peptide methionine sulfoxide reductase MsrA from Escherichia coli O17:K52:H18 (strain UMN026 / ExPEC).